Here is a 196-residue protein sequence, read N- to C-terminus: Probable thymidylate kinase (196 aa).

An ATP-binding site is contributed by 7–14; the sequence is GIDGAGKT.

This sequence belongs to the thymidylate kinase family.

It catalyses the reaction dTMP + ATP = dTDP + ADP. The polypeptide is Probable thymidylate kinase (tmk) (Archaeoglobus fulgidus (strain ATCC 49558 / DSM 4304 / JCM 9628 / NBRC 100126 / VC-16)).